The chain runs to 170 residues: NADH-quinone oxidoreductase subunit B (170 aa).

Cys46, Cys47, Cys111, and Cys141 together coordinate [4Fe-4S] cluster.

Belongs to the complex I 20 kDa subunit family. As to quaternary structure, NDH-1 is composed of 14 different subunits. Subunits NuoB, C, D, E, F, and G constitute the peripheral sector of the complex. It depends on [4Fe-4S] cluster as a cofactor.

It is found in the cell membrane. It carries out the reaction a quinone + NADH + 5 H(+)(in) = a quinol + NAD(+) + 4 H(+)(out). In terms of biological role, NDH-1 shuttles electrons from NADH, via FMN and iron-sulfur (Fe-S) centers, to quinones in the respiratory chain. The immediate electron acceptor for the enzyme in this species is believed to be a menaquinone. Couples the redox reaction to proton translocation (for every two electrons transferred, four hydrogen ions are translocated across the cytoplasmic membrane), and thus conserves the redox energy in a proton gradient. The protein is NADH-quinone oxidoreductase subunit B of Geobacillus sp. (strain WCH70).